Consider the following 588-residue polypeptide: L-fucose isomerase (588 aa).

Residues glutamate 335 and aspartate 359 each act as proton acceptor in the active site. 3 residues coordinate Mn(2+): glutamate 335, aspartate 359, and histidine 525.

The protein belongs to the L-fucose isomerase family. It depends on Mn(2+) as a cofactor.

It localises to the cytoplasm. It carries out the reaction L-fucose = L-fuculose. It participates in carbohydrate degradation; L-fucose degradation; L-lactaldehyde and glycerone phosphate from L-fucose: step 1/3. In terms of biological role, converts the aldose L-fucose into the corresponding ketose L-fuculose. In Streptococcus pneumoniae serotype 4 (strain ATCC BAA-334 / TIGR4), this protein is L-fucose isomerase.